A 494-amino-acid chain; its full sequence is UPF0371 protein SUB1165 (494 aa).

This sequence belongs to the UPF0371 family.

This chain is UPF0371 protein SUB1165, found in Streptococcus uberis (strain ATCC BAA-854 / 0140J).